The following is a 242-amino-acid chain: Orotidine 5'-phosphate decarboxylase (242 aa).

Residues Asp16, Lys37, 64 to 73 (DLKFHDIPNT), Thr128, Arg190, Gln199, Gly219, and Arg220 each bind substrate. Residue Lys66 is the Proton donor of the active site.

It belongs to the OMP decarboxylase family. Type 1 subfamily. Homodimer.

The catalysed reaction is orotidine 5'-phosphate + H(+) = UMP + CO2. The protein operates within pyrimidine metabolism; UMP biosynthesis via de novo pathway; UMP from orotate: step 2/2. Functionally, catalyzes the decarboxylation of orotidine 5'-monophosphate (OMP) to uridine 5'-monophosphate (UMP). The sequence is that of Orotidine 5'-phosphate decarboxylase from Prochlorococcus marinus (strain AS9601).